The sequence spans 432 residues: N-acylneuraminate cytidylyltransferase (432 aa).

Residue M1 is modified to N-acetylmethionine. The disordered stretch occupies residues 1 to 38 (MDALEKGAATSGPAPRGRPSRGRPPKLQRSRGAGRGLE). Residues 15–31 (PRGRPSRGRPPKLQRSR) carry the BC1 motif motif. Residues 18–29 (RPSRGRPPKLQR) show a composition bias toward basic residues. An omega-N-methylarginine mark is found at R35 and R50. Substrate contacts are provided by R50, N60, R109, S118, S120, and Q141. Residues 198–204 (KRPRRQD) carry the BC2 motif motif. R199 is a catalytic residue. The BC3 motif signature appears at 267–274 (KEKLKEIK).

Belongs to the CMP-NeuNAc synthase family. In terms of assembly, homotetramer; the active enzyme is formed by a dimer of dimers. Liver.

The protein localises to the nucleus. The catalysed reaction is an N-acylneuraminate + CTP = a CMP-N-acyl-beta-neuraminate + diphosphate. The protein operates within amino-sugar metabolism; N-acetylneuraminate metabolism. Functionally, catalyzes the activation of N-acetylneuraminic acid (NeuNAc) to cytidine 5'-monophosphate N-acetylneuraminic acid (CMP-NeuNAc), a substrate required for the addition of sialic acid. Has some activity toward NeuNAc, N-glycolylneuraminic acid (Neu5Gc) or 2-keto-3-deoxy-D-glycero-D-galacto-nononic acid (KDN). In Rattus norvegicus (Rat), this protein is N-acylneuraminate cytidylyltransferase (Cmas).